The primary structure comprises 217 residues: 3-isopropylmalate dehydratase small subunit (217 aa).

The protein belongs to the LeuD family. LeuD type 1 subfamily. In terms of assembly, heterodimer of LeuC and LeuD.

It catalyses the reaction (2R,3S)-3-isopropylmalate = (2S)-2-isopropylmalate. It functions in the pathway amino-acid biosynthesis; L-leucine biosynthesis; L-leucine from 3-methyl-2-oxobutanoate: step 2/4. Catalyzes the isomerization between 2-isopropylmalate and 3-isopropylmalate, via the formation of 2-isopropylmaleate. The chain is 3-isopropylmalate dehydratase small subunit from Paracidovorax citrulli (strain AAC00-1) (Acidovorax citrulli).